The primary structure comprises 105 residues: Large ribosomal subunit protein bL21 (105 aa).

This sequence belongs to the bacterial ribosomal protein bL21 family. As to quaternary structure, part of the 50S ribosomal subunit. Contacts protein L20.

Functionally, this protein binds to 23S rRNA in the presence of protein L20. In Methylobacterium sp. (strain 4-46), this protein is Large ribosomal subunit protein bL21.